The chain runs to 1035 residues: Protein SEY1 homolog (1035 aa).

Residues 32–267 form the GB1/RHD3-type G domain; sequence DGTFICVSVF…TTLIPLTDSS (236 aa). Residue 42–49 participates in GTP binding; sequence GPQSSGKS.

It belongs to the TRAFAC class dynamin-like GTPase superfamily. GB1/RHD3 GTPase family. RHD3 subfamily.

The protein resides in the endoplasmic reticulum membrane. Probable GTP-binding protein that may be involved in cell development. The chain is Protein SEY1 homolog from Giardia intestinalis (strain ATCC 50803 / WB clone C6) (Giardia lamblia).